Reading from the N-terminus, the 374-residue chain is Isocitrate dehydrogenase [NAD] catalytic subunit 5, mitochondrial (374 aa).

The N-terminal 44 residues, 1–44 (MTMAANLARRLIGNRSTQILGAVNSSSGAASSVARAFCSSTTPI), are a transit peptide targeting the mitochondrion. Residues R127, R137, R158, and D245 each contribute to the substrate site. Residues D245, D269, and D273 each coordinate Mg(2+).

It belongs to the isocitrate and isopropylmalate dehydrogenases family. In terms of assembly, heterooligomer of catalytic and regulatory subunits. Mg(2+) serves as cofactor. It depends on Mn(2+) as a cofactor. Ubiquitous.

The protein resides in the mitochondrion. It carries out the reaction D-threo-isocitrate + NAD(+) = 2-oxoglutarate + CO2 + NADH. Performs an essential role in the oxidative function of the citric acid cycle. The protein is Isocitrate dehydrogenase [NAD] catalytic subunit 5, mitochondrial (IDH5) of Arabidopsis thaliana (Mouse-ear cress).